Reading from the N-terminus, the 498-residue chain is Protein DETOXIFICATION 30 (498 aa).

12 helical membrane-spanning segments follow: residues 64 to 86 (YSLG…AAVS), 91 to 111 (VIAG…ETLC), 136 to 156 (VTAV…AFIG), 161 to 181 (ISSA…AYAV), 197 to 217 (VMAA…WFVI), 227 to 247 (LAVV…VYIF), 277 to 297 (AVML…AGYL), 302 to 322 (ISVA…MIAI), 349 to 369 (LVAV…LLIF), 393 to 413 (ILAV…VAVG), 419 to 439 (VVAY…GLLL), and 447 to 467 (VMGI…VLTW).

This sequence belongs to the multi antimicrobial extrusion (MATE) (TC 2.A.66.1) family.

It is found in the membrane. The protein is Protein DETOXIFICATION 30 of Arabidopsis thaliana (Mouse-ear cress).